The sequence spans 298 residues: NADH-cytochrome b5 reductase 2 (298 aa).

The helical transmembrane segment at 13–33 threads the bilayer; that stretch reads FLPFAIGAVAVTAGALYLNGW. Residues 48-152 form the FAD-binding FR-type domain; it reads RKWIDLELEK…QGPIPKWQWK (105 aa). 155–190 contacts FAD; sequence SFDTITLLGGGTGITPLYQLVHHITQNKEDKTKINL.

Belongs to the flavoprotein pyridine nucleotide cytochrome reductase family. It depends on FAD as a cofactor.

Its subcellular location is the mitochondrion outer membrane. The catalysed reaction is 2 Fe(III)-[cytochrome b5] + NADH = 2 Fe(II)-[cytochrome b5] + NAD(+) + H(+). Its function is as follows. May mediate the reduction of outer membrane cytochrome b5. The sequence is that of NADH-cytochrome b5 reductase 2 (MCR1) from Candida glabrata (strain ATCC 2001 / BCRC 20586 / JCM 3761 / NBRC 0622 / NRRL Y-65 / CBS 138) (Yeast).